The chain runs to 708 residues: Leukotoxin translocation ATP-binding protein LktB (708 aa).

One can recognise a Peptidase C39 domain in the interval 1 to 126 (MEANHQRNDL…ACYQGQLILV (126 aa)). Positions 155 to 437 (FLETLIVSIF…LAQLWQDFQQ (283 aa)) constitute an ABC transmembrane type-1 domain. Helical transmembrane passes span 159-179 (LIVS…FQVV), 192-212 (LNII…LSGL), 270-290 (ALTS…MWYY), 296-316 (LVIL…SPIL), and 389-409 (VMVI…LSIG). In terms of domain architecture, ABC transporter spans 469 to 704 (ISFKNIRFRY…SNGLYSYLHQ (236 aa)). Position 503 to 510 (503 to 510 (GRSGSGKS)) interacts with ATP.

The protein belongs to the ABC transporter superfamily. Protein-1 exporter (TC 3.A.1.109) family. In terms of assembly, homodimer.

Its subcellular location is the cell inner membrane. It catalyses the reaction ATP + H2O + proteinSide 1 = ADP + phosphate + proteinSide 2.. Functionally, part of the ABC transporter complex LktBD involved in leukotoxin export. Transmembrane domains (TMD) form a pore in the inner membrane and the ATP-binding domain (NBD) is responsible for energy generation. The protein is Leukotoxin translocation ATP-binding protein LktB (lktB) of Mannheimia haemolytica (Pasteurella haemolytica).